The following is a 187-amino-acid chain: Troponin I, slow skeletal muscle (187 aa).

An N-acetylproline modification is found at P2. Positions 2 to 48 (PEVERKPKITASRKLLLKSLMLAKAKECWEQEHEEREAEKVRYLAER) are involved in binding TNC. At S58 the chain carries Phosphoserine. The interval 97-118 (LKLKVMDLRGKFKRPPLRRVRV) is involved in binding TNC and actin.

It belongs to the troponin I family. As to quaternary structure, binds to actin and tropomyosin. As to expression, highest levels observed in human skeletal muscle (e.g. gastrocnemious muscle), differentiated cultures of primary human muscle cells and rhabdomyosarcoma cells cultured in low serum medium. Expressed in C2 muscle cell myoblasts and myotubes.

Functionally, troponin I is the inhibitory subunit of troponin, the thin filament regulatory complex which confers calcium-sensitivity to striated muscle actomyosin ATPase activity. In Homo sapiens (Human), this protein is Troponin I, slow skeletal muscle (TNNI1).